Here is a 441-residue protein sequence, read N- to C-terminus: Cysteine--tRNA ligase (441 aa).

Cys-24 is a binding site for Zn(2+). Residues Pro-26–Asn-36 carry the 'HIGH' region motif. Positions 204, 230, and 234 each coordinate Zn(2+). A 'KMSKS' region motif is present at residues Lys-262–Ser-266. Lys-265 contributes to the ATP binding site.

The protein belongs to the class-I aminoacyl-tRNA synthetase family. Monomer. Requires Zn(2+) as cofactor.

The protein resides in the cytoplasm. It carries out the reaction tRNA(Cys) + L-cysteine + ATP = L-cysteinyl-tRNA(Cys) + AMP + diphosphate. In Mycoplasma capricolum subsp. capricolum (strain California kid / ATCC 27343 / NCTC 10154), this protein is Cysteine--tRNA ligase.